Reading from the N-terminus, the 216-residue chain is DegV domain-containing protein UU190 (216 aa).

Residues Met1–Ala215 form the DegV domain. A hexadecanoate-binding site is contributed by Ser26.

In terms of biological role, may bind long-chain fatty acids, such as palmitate, and may play a role in lipid transport or fatty acid metabolism. The chain is DegV domain-containing protein UU190 from Ureaplasma parvum serovar 3 (strain ATCC 700970).